A 342-amino-acid polypeptide reads, in one-letter code: Methylthioribose-1-phosphate isomerase (342 aa).

Residues 49 to 51, Arg86, and Gln187 each bind substrate; that span reads RGA. The active-site Proton donor is the Asp228. Residue 238–239 coordinates substrate; sequence NK.

It belongs to the eIF-2B alpha/beta/delta subunits family. MtnA subfamily.

The enzyme catalyses 5-(methylsulfanyl)-alpha-D-ribose 1-phosphate = 5-(methylsulfanyl)-D-ribulose 1-phosphate. It participates in amino-acid biosynthesis; L-methionine biosynthesis via salvage pathway; L-methionine from S-methyl-5-thio-alpha-D-ribose 1-phosphate: step 1/6. In terms of biological role, catalyzes the interconversion of methylthioribose-1-phosphate (MTR-1-P) into methylthioribulose-1-phosphate (MTRu-1-P). This chain is Methylthioribose-1-phosphate isomerase, found in Enterobacter sp. (strain 638).